Reading from the N-terminus, the 300-residue chain is Matrix protein (300 aa).

The disordered stretch occupies residues 1–36 (MHMFPLGVVEDSDPPGPPIGRASGSPPPGAGRSTAK).

Homodimer. Dimerization is critical for virion formation. Interacts with host ANP32B.

It localises to the virion. Its subcellular location is the host cell membrane. Its function is as follows. The M protein has a crucial role in virus assembly and interacts with the RNP complex as well as with the viral membrane. Associates with phosphatidylserine (PS) and phosphatidylinositol 4,5-bisphosphate (PIP2) at the plasma membrane. Interaction with PIP2 triggers matrix protein lattice polymerization. Matrix proteins induce host membrane deformation and curvature necessary for virion assembly/budding. In Measles virus (strain Yamagata-1) (MeV), this protein is Matrix protein (M).